We begin with the raw amino-acid sequence, 362 residues long: METTVRKQKKNLETKKPSIYSLQLHEMQDWLKEQGEPKFRAGQIFDWLYKKRVKNYEDMSNLSKGLRDKLSNSFDITTLKTLVKQTSSDGTIKFLFQLYDGYSIETVLMRHEYGNSICVTTQVGCRIGCTFCASTLGGLKRNLEAGEIVAQVVEVQRALDETEERVSSLVVMGIGEPFDNYDNLMGFLRIINHEKGLHIGARHMTVSTSGIIPKIYKFAEEDLQINFAISLHAPNSELRSKLMPINRAYKLPDLMEAIKYYVNRTGRRITFEYGLFGGENDQVEHAEELAALLKGVKCHVNLIPVNYVPERDYVRTPREQIFLFEKTLKDRGVNVTIRREQGHDIDAACGQLRAKERKEETR.

Glu-105 functions as the Proton acceptor in the catalytic mechanism. Residues 111–344 (HEYGNSICVT…VTIRREQGHD (234 aa)) enclose the Radical SAM core domain. Cys-118 and Cys-349 are disulfide-bonded. [4Fe-4S] cluster contacts are provided by Cys-125, Cys-129, and Cys-132. S-adenosyl-L-methionine-binding positions include 175 to 176 (GE), Ser-207, 230 to 232 (SLH), and Asn-306. The active-site S-methylcysteine intermediate is Cys-349.

The protein belongs to the radical SAM superfamily. RlmN family. [4Fe-4S] cluster serves as cofactor.

It localises to the cytoplasm. The catalysed reaction is adenosine(2503) in 23S rRNA + 2 reduced [2Fe-2S]-[ferredoxin] + 2 S-adenosyl-L-methionine = 2-methyladenosine(2503) in 23S rRNA + 5'-deoxyadenosine + L-methionine + 2 oxidized [2Fe-2S]-[ferredoxin] + S-adenosyl-L-homocysteine. It catalyses the reaction adenosine(37) in tRNA + 2 reduced [2Fe-2S]-[ferredoxin] + 2 S-adenosyl-L-methionine = 2-methyladenosine(37) in tRNA + 5'-deoxyadenosine + L-methionine + 2 oxidized [2Fe-2S]-[ferredoxin] + S-adenosyl-L-homocysteine. In terms of biological role, specifically methylates position 2 of adenine 2503 in 23S rRNA and position 2 of adenine 37 in tRNAs. The protein is Probable dual-specificity RNA methyltransferase RlmN of Bacillus cereus (strain ATCC 14579 / DSM 31 / CCUG 7414 / JCM 2152 / NBRC 15305 / NCIMB 9373 / NCTC 2599 / NRRL B-3711).